The sequence spans 155 residues: Aspartate 1-decarboxylase (155 aa).

S24 acts as the Schiff-base intermediate with substrate; via pyruvic acid in catalysis. At S24 the chain carries Pyruvic acid (Ser). Residue T56 coordinates substrate. Y57 acts as the Proton donor in catalysis. 72-74 (GAA) is a binding site for substrate.

The protein belongs to the PanD family. In terms of assembly, heterooctamer of four alpha and four beta subunits. Requires pyruvate as cofactor. Post-translationally, is synthesized initially as an inactive proenzyme, which is activated by self-cleavage at a specific serine bond to produce a beta-subunit with a hydroxyl group at its C-terminus and an alpha-subunit with a pyruvoyl group at its N-terminus.

The protein resides in the cytoplasm. It catalyses the reaction L-aspartate + H(+) = beta-alanine + CO2. The protein operates within cofactor biosynthesis; (R)-pantothenate biosynthesis; beta-alanine from L-aspartate: step 1/1. In terms of biological role, catalyzes the pyruvoyl-dependent decarboxylation of aspartate to produce beta-alanine. In Agrobacterium fabrum (strain C58 / ATCC 33970) (Agrobacterium tumefaciens (strain C58)), this protein is Aspartate 1-decarboxylase.